The following is a 131-amino-acid chain: Profilin (131 aa).

The protein belongs to the profilin family. As to quaternary structure, occurs in many kinds of cells as a complex with monomeric actin in a 1:1 ratio.

The protein localises to the cytoplasm. It localises to the cytoskeleton. In terms of biological role, binds to actin and affects the structure of the cytoskeleton. At high concentrations, profilin prevents the polymerization of actin, whereas it enhances it at low concentrations. Has a high affinity for poly-proline. The protein is Profilin of Citrullus lanatus (Watermelon).